The sequence spans 427 residues: Aspartate aminotransferase, mitochondrial (427 aa).

A mitochondrion-targeting transit peptide spans 1 to 26; that stretch reads MALLKSRLLVGVARCQPCLAAVQGRA. G62, W159, and N212 together coordinate substrate. N6-(pyridoxal phosphate)lysine is present on K276. R404 lines the substrate pocket.

The protein belongs to the class-I pyridoxal-phosphate-dependent aminotransferase family. Homodimer. Pyridoxal 5'-phosphate is required as a cofactor.

The protein resides in the mitochondrion matrix. The catalysed reaction is L-aspartate + 2-oxoglutarate = oxaloacetate + L-glutamate. It carries out the reaction L-kynurenine + 2-oxoglutarate = kynurenate + L-glutamate + H2O. Its function is as follows. Catalyzes the irreversible transamination of the L-tryptophan metabolite L-kynurenine to form kynurenic acid (KA). As a member of the malate-aspartate shuttle, it has a key role in the intracellular NAD(H) redox balance. Is important for metabolite exchange between mitochondria and cytosol, and for amino acid metabolism. The sequence is that of Aspartate aminotransferase, mitochondrial (got2) from Xenopus tropicalis (Western clawed frog).